The following is a 738-amino-acid chain: MATKFPSFSQGLAQDPTTRRIWYGIATAHDFESHDGMTEEKLYQKLFSTHFGHLAIIGLWVSGNLFHIAWQGNFEQWVSDPLHVRPIAHAIWDPHFGQGAIDAFTQAGASSPVNIAYSGLYHWFYTIGMTTNAELYQGSIFMMILSAWALFAGWLHLQPKFRPSLAWFKNAESRLNHHLAVLFGFSSIAWTGHLVHVAIPESRGQHVGWDNFLSVMPHPAGLGPFFTGNWGVYAQNPDTTGQIFGTAEGSGTAILTFLGGFHPQTEALWLTDIAHHHLAIGVIFVIAGHMYRTNFGIGHSIREILEAHNPPTGTPGDLGAGHKGLYDTINNSLHFQLGLALASLGVITSLVAQHMYAMPSYAFIAKDYTTQAALYTHHQYIAIALMCGAFAHGAIFFIRDYDPEANKDNVLGRMLEHKEAIISHLSWVSLFLGFHTLGLYVHNDVVVAFGTPEKQILVEPVFAQFVQAASGKAIYGFDVLLANAGGAAANANAAYMGGWMDAINGVRGSNDLFLPIGPGDFLVHHAIALGLHTTTLILVKGALDARGSKLMPDKKDFGYSFPCDGPGRGGTCDISAWDAFYLAVFWALNTVGWVTFYWHWKHLAIWQGNVAQFNESSTYLMGWFRDYLWLNSSQLINGYNPFGSNNLAVWSWMFLFGHLVWATGFMFLISWRGYWQELIETIVWAHERSPIANMMGWRDKPVALSIVQARVVGLAHFTVGYVLTYGAFLIASTSGKFG.

A run of 8 helical transmembrane segments spans residues 46 to 69 (LFST…FHIA), 135 to 158 (LYQG…LHLQ), 175 to 199 (LNHH…HVAI), 273 to 291 (IAHH…GHMY), 333 to 356 (LHFQ…QHMY), 372 to 398 (AALY…IFFI), 420 to 442 (AIIS…LYVH), and 521 to 539 (FLVH…LILV). Residues cysteine 563 and cysteine 572 each coordinate [4Fe-4S] cluster. 2 consecutive transmembrane segments (helical) span residues 579–600 (AFYL…YWHW) and 647–669 (LAVW…MFLI). Histidine 658, methionine 666, and tyrosine 674 together coordinate chlorophyll a. A phylloquinone-binding site is contributed by tryptophan 675. A helical membrane pass occupies residues 711-731 (VVGLAHFTVGYVLTYGAFLIA).

The protein belongs to the PsaA/PsaB family. In terms of assembly, the PsaA/B heterodimer binds the P700 chlorophyll special pair and subsequent electron acceptors. PSI consists of a core antenna complex that captures photons, and an electron transfer chain that converts photonic excitation into a charge separation. The cyanobacterial PSI reaction center is composed of one copy each of PsaA,B,C,D,E,F,I,J,K,L,M and X, and forms trimeric complexes. It depends on PSI electron transfer chain: 5 chlorophyll a, 1 chlorophyll a', 2 phylloquinones and 3 4Fe-4S clusters. PSI core antenna: 90 chlorophyll a, 22 carotenoids, 3 phospholipids and 1 galactolipid. P700 is a chlorophyll a/chlorophyll a' dimer, A0 is one or more chlorophyll a, A1 is one or both phylloquinones and FX is a shared 4Fe-4S iron-sulfur center. as a cofactor.

It is found in the cellular thylakoid membrane. The catalysed reaction is reduced [plastocyanin] + hnu + oxidized [2Fe-2S]-[ferredoxin] = oxidized [plastocyanin] + reduced [2Fe-2S]-[ferredoxin]. PsaA and PsaB bind P700, the primary electron donor of photosystem I (PSI), as well as the electron acceptors A0, A1 and FX. PSI is a plastocyanin/cytochrome c6-ferredoxin oxidoreductase, converting photonic excitation into a charge separation, which transfers an electron from the donor P700 chlorophyll pair to the spectroscopically characterized acceptors A0, A1, FX, FA and FB in turn. Oxidized P700 is reduced on the lumenal side of the thylakoid membrane by plastocyanin or cytochrome c6. This chain is Photosystem I P700 chlorophyll a apoprotein A2, found in Synechococcus sp. (strain CC9311).